The chain runs to 61 residues: Small ribosomal subunit protein uS14 (61 aa).

Positions 24, 27, 40, and 43 each coordinate Zn(2+).

This sequence belongs to the universal ribosomal protein uS14 family. Zinc-binding uS14 subfamily. As to quaternary structure, part of the 30S ribosomal subunit. Contacts proteins S3 and S10. Zn(2+) serves as cofactor.

Binds 16S rRNA, required for the assembly of 30S particles and may also be responsible for determining the conformation of the 16S rRNA at the A site. The protein is Small ribosomal subunit protein uS14 of Mycobacterium avium (strain 104).